Here is a 133-residue protein sequence, read N- to C-terminus: Hexon-interlacing protein (133 aa).

Residues 97 to 127 (REEDALSVVLTRMEELSQQLQDLFAKVALLN) adopt a coiled-coil conformation.

Belongs to the adenoviridae hexon-interlacing protein family. In terms of assembly, homotrimer. Interacts with hexon protein; this interaction tethers the hexons together. Self-interacts with adjacent proteins. Interacts with kinesin light chain KLC1; this interaction leads to capsid disruption at the nuclear pore complex during virus entry into host cell.

It is found in the virion. Its subcellular location is the host nucleus. Its function is as follows. Structural component of the virion that acts as a cement protein on the capsid exterior and forms triskelion structures consisting of three molecules that stabilize three hexon trimers at the center of each icosahedral facet and fixes the peripentonal hexons. Dispensable for assembly. During virus entry, recruits the anterograde motor kinesin-1 to the capsid docked at the nuclear pore complex thereby subjecting the docked capsid to a pulling force. The resulting tension leads to capsid disruption, dispersion of capsid fragments toward cell periphery and eventually viral DNA entry into the host nucleus. This is Hexon-interlacing protein from Homo sapiens (Human).